Reading from the N-terminus, the 413-residue chain is Serine hydroxymethyltransferase (413 aa).

Residues leucine 119 and 123–125 contribute to the (6S)-5,6,7,8-tetrahydrofolate site; that span reads GHL. N6-(pyridoxal phosphate)lysine is present on lysine 228.

Belongs to the SHMT family. As to quaternary structure, homodimer. Pyridoxal 5'-phosphate is required as a cofactor.

It localises to the cytoplasm. The enzyme catalyses (6R)-5,10-methylene-5,6,7,8-tetrahydrofolate + glycine + H2O = (6S)-5,6,7,8-tetrahydrofolate + L-serine. Its pathway is one-carbon metabolism; tetrahydrofolate interconversion. It functions in the pathway amino-acid biosynthesis; glycine biosynthesis; glycine from L-serine: step 1/1. Its function is as follows. Catalyzes the reversible interconversion of serine and glycine with tetrahydrofolate (THF) serving as the one-carbon carrier. This reaction serves as the major source of one-carbon groups required for the biosynthesis of purines, thymidylate, methionine, and other important biomolecules. Also exhibits THF-independent aldolase activity toward beta-hydroxyamino acids, producing glycine and aldehydes, via a retro-aldol mechanism. In Caldanaerobacter subterraneus subsp. tengcongensis (strain DSM 15242 / JCM 11007 / NBRC 100824 / MB4) (Thermoanaerobacter tengcongensis), this protein is Serine hydroxymethyltransferase.